Consider the following 534-residue polypeptide: Cytochrome c oxidase subunit 1 (534 aa).

A helical membrane pass occupies residues Val-16–Ile-36. The Ca(2+) site is built by Glu-39, Ala-42, and Gly-44. The next 6 membrane-spanning stretches (helical) occupy residues Val-57–Gly-77, Ile-101–Ser-121, Ala-147–Val-167, Leu-182–Val-202, Leu-235–Ile-255, and Val-267–Val-287. His-62 lines the Fe(II)-heme a pocket. His-241 is a Cu cation binding site. Residues His-241–Tyr-245 constitute a cross-link (1'-histidyl-3'-tyrosine (His-Tyr)). Residue Tyr-245 coordinates O2. Residues His-290 and His-291 each coordinate Cu cation. The next 2 helical transmembrane spans lie at Met-310–Gly-330 and Met-338–Leu-358. Mg(2+) is bound by residues His-368 and Asp-369. A run of 2 helical transmembrane segments spans residues Tyr-372–Gly-392 and Ile-412–Gly-432. Residue His-376 participates in heme a3 binding. His-378 lines the Fe(II)-heme a pocket. Pro-441 lines the Ca(2+) pocket. Residues Tyr-452 to Leu-472 form a helical membrane-spanning segment.

Belongs to the heme-copper respiratory oxidase family. Component of the cytochrome c oxidase (complex IV, CIV), a multisubunit enzyme composed of a catalytic core of 3 subunits and several supernumerary subunits. The complex exists as a monomer or a dimer and forms supercomplexes (SCs) in the inner mitochondrial membrane with ubiquinol-cytochrome c oxidoreductase (cytochrome b-c1 complex, complex III, CIII). Heme serves as cofactor. The cofactor is Cu cation.

The protein resides in the mitochondrion inner membrane. It carries out the reaction 4 Fe(II)-[cytochrome c] + O2 + 8 H(+)(in) = 4 Fe(III)-[cytochrome c] + 2 H2O + 4 H(+)(out). It functions in the pathway energy metabolism; oxidative phosphorylation. In terms of biological role, component of the cytochrome c oxidase, the last enzyme in the mitochondrial electron transport chain which drives oxidative phosphorylation. The respiratory chain contains 3 multisubunit complexes succinate dehydrogenase (complex II, CII), ubiquinol-cytochrome c oxidoreductase (cytochrome b-c1 complex, complex III, CIII) and cytochrome c oxidase (complex IV, CIV), that cooperate to transfer electrons derived from NADH and succinate to molecular oxygen, creating an electrochemical gradient over the inner membrane that drives transmembrane transport and the ATP synthase. Cytochrome c oxidase is the component of the respiratory chain that catalyzes the reduction of oxygen to water. Electrons originating from reduced cytochrome c in the intermembrane space (IMS) are transferred via the dinuclear copper A center (CU(A)) of subunit 2 and heme A of subunit 1 to the active site in subunit 1, a binuclear center (BNC) formed by heme A3 and copper B (CU(B)). The BNC reduces molecular oxygen to 2 water molecules using 4 electrons from cytochrome c in the IMS and 4 protons from the mitochondrial matrix. The chain is Cytochrome c oxidase subunit 1 (COX1) from Kluyveromyces lactis (strain ATCC 8585 / CBS 2359 / DSM 70799 / NBRC 1267 / NRRL Y-1140 / WM37) (Yeast).